The primary structure comprises 326 residues: N-acetyl-gamma-glutamyl-phosphate reductase (326 aa).

The active site involves C155.

The protein belongs to the NAGSA dehydrogenase family. Type 1 subfamily.

The protein localises to the cytoplasm. It carries out the reaction N-acetyl-L-glutamate 5-semialdehyde + phosphate + NADP(+) = N-acetyl-L-glutamyl 5-phosphate + NADPH + H(+). It functions in the pathway amino-acid biosynthesis; L-arginine biosynthesis; N(2)-acetyl-L-ornithine from L-glutamate: step 3/4. Catalyzes the NADPH-dependent reduction of N-acetyl-5-glutamyl phosphate to yield N-acetyl-L-glutamate 5-semialdehyde. The chain is N-acetyl-gamma-glutamyl-phosphate reductase from Shewanella denitrificans (strain OS217 / ATCC BAA-1090 / DSM 15013).